Reading from the N-terminus, the 342-residue chain is Biotin synthase (342 aa).

The region spanning 36–260 (NRIQISTLLS…MMPKSYIRLS (225 aa)) is the Radical SAM core domain. Residues Cys51, Cys55, and Cys58 each contribute to the [4Fe-4S] cluster site. [2Fe-2S] cluster contacts are provided by Cys95, Cys126, Cys186, and Arg258.

Belongs to the radical SAM superfamily. Biotin synthase family. Homodimer. [4Fe-4S] cluster serves as cofactor. Requires [2Fe-2S] cluster as cofactor.

The enzyme catalyses (4R,5S)-dethiobiotin + (sulfur carrier)-SH + 2 reduced [2Fe-2S]-[ferredoxin] + 2 S-adenosyl-L-methionine = (sulfur carrier)-H + biotin + 2 5'-deoxyadenosine + 2 L-methionine + 2 oxidized [2Fe-2S]-[ferredoxin]. It participates in cofactor biosynthesis; biotin biosynthesis; biotin from 7,8-diaminononanoate: step 2/2. Its function is as follows. Catalyzes the conversion of dethiobiotin (DTB) to biotin by the insertion of a sulfur atom into dethiobiotin via a radical-based mechanism. In Buchnera aphidicola subsp. Schizaphis graminum (strain Sg), this protein is Biotin synthase.